We begin with the raw amino-acid sequence, 131 residues long: UPF0102 protein RALTA_A3032 (131 aa).

Residues 1–12 are compositionally biased toward polar residues; that stretch reads MMRSFKSTQEPS. The interval 1–21 is disordered; sequence MMRSFKSTQEPSRQARGAQAE.

It belongs to the UPF0102 family.

This is UPF0102 protein RALTA_A3032 from Cupriavidus taiwanensis (strain DSM 17343 / BCRC 17206 / CCUG 44338 / CIP 107171 / LMG 19424 / R1) (Ralstonia taiwanensis (strain LMG 19424)).